Reading from the N-terminus, the 659-residue chain is Threonine--tRNA ligase (659 aa).

In terms of domain architecture, TGS spans 1-61; sequence MSAVPELRIT…ADGDVVEEIR (61 aa). The catalytic stretch occupies residues 260-555; it reads DHRKLGVELD…LLEHYAGAFP (296 aa). Zn(2+) is bound by residues C353, H404, and H532.

Belongs to the class-II aminoacyl-tRNA synthetase family. In terms of assembly, homodimer. Zn(2+) is required as a cofactor.

The protein localises to the cytoplasm. The catalysed reaction is tRNA(Thr) + L-threonine + ATP = L-threonyl-tRNA(Thr) + AMP + diphosphate + H(+). In terms of biological role, catalyzes the attachment of threonine to tRNA(Thr) in a two-step reaction: L-threonine is first activated by ATP to form Thr-AMP and then transferred to the acceptor end of tRNA(Thr). Also edits incorrectly charged L-seryl-tRNA(Thr). The polypeptide is Threonine--tRNA ligase (Thermobifida fusca (strain YX)).